Reading from the N-terminus, the 332-residue chain is Anthranilate phosphoribosyltransferase (332 aa).

5-phospho-alpha-D-ribose 1-diphosphate-binding positions include glycine 78, 81 to 82 (GD), serine 86, 88 to 91 (NIST), 106 to 114 (KHGNKSITS), and serine 118. Residue glycine 78 coordinates anthranilate. Serine 90 provides a ligand contact to Mg(2+). Position 109 (asparagine 109) interacts with anthranilate. Arginine 163 is an anthranilate binding site. The Mg(2+) site is built by aspartate 222 and glutamate 223.

Belongs to the anthranilate phosphoribosyltransferase family. In terms of assembly, homodimer. Requires Mg(2+) as cofactor.

It catalyses the reaction N-(5-phospho-beta-D-ribosyl)anthranilate + diphosphate = 5-phospho-alpha-D-ribose 1-diphosphate + anthranilate. It functions in the pathway amino-acid biosynthesis; L-tryptophan biosynthesis; L-tryptophan from chorismate: step 2/5. In terms of biological role, catalyzes the transfer of the phosphoribosyl group of 5-phosphorylribose-1-pyrophosphate (PRPP) to anthranilate to yield N-(5'-phosphoribosyl)-anthranilate (PRA). This is Anthranilate phosphoribosyltransferase from Staphylococcus aureus (strain Mu3 / ATCC 700698).